Reading from the N-terminus, the 419-residue chain is Serine hydroxymethyltransferase (419 aa).

Residues Leu-121 and 125–127 contribute to the (6S)-5,6,7,8-tetrahydrofolate site; that span reads GHL. N6-(pyridoxal phosphate)lysine is present on Lys-230. 355-357 is a binding site for (6S)-5,6,7,8-tetrahydrofolate; that stretch reads SPF.

The protein belongs to the SHMT family. Homodimer. Pyridoxal 5'-phosphate serves as cofactor.

The protein localises to the cytoplasm. The catalysed reaction is (6R)-5,10-methylene-5,6,7,8-tetrahydrofolate + glycine + H2O = (6S)-5,6,7,8-tetrahydrofolate + L-serine. It functions in the pathway one-carbon metabolism; tetrahydrofolate interconversion. The protein operates within amino-acid biosynthesis; glycine biosynthesis; glycine from L-serine: step 1/1. Functionally, catalyzes the reversible interconversion of serine and glycine with tetrahydrofolate (THF) serving as the one-carbon carrier. This reaction serves as the major source of one-carbon groups required for the biosynthesis of purines, thymidylate, methionine, and other important biomolecules. Also exhibits THF-independent aldolase activity toward beta-hydroxyamino acids, producing glycine and aldehydes, via a retro-aldol mechanism. The polypeptide is Serine hydroxymethyltransferase (Streptococcus equi subsp. equi (strain 4047)).